Here is a 476-residue protein sequence, read N- to C-terminus: Flavin-dependent halogenase otaD (476 aa).

2 residues coordinate FAD: Gly-14 and Gly-17. Chloride contacts are provided by Ser-304 and Gly-305. An FAD-binding site is contributed by Val-306.

This sequence belongs to the flavin-dependent halogenase family.

The enzyme catalyses ochratoxin B + FADH2 + chloride + O2 = ochratoxin A + FAD + 2 H2O. It participates in mycotoxin biosynthesis. Its function is as follows. Flavin-dependent halogenase; part of the gene cluster that mediates the biosynthesis of ochratoxin A (OTA), a mycotoxin composed of a chlorinated type I polyketide dihydroisocoumarin moiety linked to L-phenylalanine, and demonstrated to have nephrotoxic, immunotoxic, genotoxic, neurotoxic, and teratogenic properties. OtaD chlorinates ochratoxin B (OTB) at the C-5 position to form OTA. The pathway begins with the highly reducing polyketide synthase otaA that catalyzes the formation of the isocoumarin group during the initial stages of biosynthesis, starting from one acetate and 4 malonate units, to originate the characteristic pentaketide skeleton 7-methylmellein (7-MM) of the OTA molecule. The newly identified cyclase otaY might be involved in the polyketide cyclization reaction during the initial steps of the OTA biosynthesis. 7-MM is then oxidized into 7-carboxymellein (also called ochratoxin beta) by the cytochrome P450 monooxygenase otaC. The NRPS encoded by the otaB gene is involved in the linking of phenylalanine to the dihydroisocoumarin ring. The reaction catalyzed by NRPS results in the production of ochratoxin B (OTB), which is the non-chlorinated analog of OTA and which subsequently serves as the substrate of the halogenase otaD for chlorination activity to form the final molecular structure of OTA, containing a chlorine atom in the C-5 position of the molecule. This is Flavin-dependent halogenase otaD from Aspergillus niger (strain ATCC MYA-4892 / CBS 513.88 / FGSC A1513).